The chain runs to 470 residues: Siroheme synthase 2 (470 aa).

The tract at residues Met1 to Leu202 is precorrin-2 dehydrogenase /sirohydrochlorin ferrochelatase. Residues Glu22–Val23 and Pro43–Glu44 each bind NAD(+). A Phosphoserine modification is found at Ser126. Positions Gly214 to Ala470 are uroporphyrinogen-III C-methyltransferase. Position 223 (Pro223) interacts with S-adenosyl-L-methionine. Asp246 serves as the catalytic Proton acceptor. Residue Lys268 is the Proton donor of the active site. Residues Gly299 to Asp301, Thr329 to Ala330, Met381, and Gly410 each bind S-adenosyl-L-methionine.

The protein in the N-terminal section; belongs to the precorrin-2 dehydrogenase / sirohydrochlorin ferrochelatase family. In the C-terminal section; belongs to the precorrin methyltransferase family.

It carries out the reaction uroporphyrinogen III + 2 S-adenosyl-L-methionine = precorrin-2 + 2 S-adenosyl-L-homocysteine + H(+). It catalyses the reaction precorrin-2 + NAD(+) = sirohydrochlorin + NADH + 2 H(+). The enzyme catalyses siroheme + 2 H(+) = sirohydrochlorin + Fe(2+). It functions in the pathway cofactor biosynthesis; adenosylcobalamin biosynthesis; precorrin-2 from uroporphyrinogen III: step 1/1. It participates in cofactor biosynthesis; adenosylcobalamin biosynthesis; sirohydrochlorin from precorrin-2: step 1/1. The protein operates within porphyrin-containing compound metabolism; siroheme biosynthesis; precorrin-2 from uroporphyrinogen III: step 1/1. Its pathway is porphyrin-containing compound metabolism; siroheme biosynthesis; siroheme from sirohydrochlorin: step 1/1. It functions in the pathway porphyrin-containing compound metabolism; siroheme biosynthesis; sirohydrochlorin from precorrin-2: step 1/1. Functionally, multifunctional enzyme that catalyzes the SAM-dependent methylations of uroporphyrinogen III at position C-2 and C-7 to form precorrin-2 via precorrin-1. Then it catalyzes the NAD-dependent ring dehydrogenation of precorrin-2 to yield sirohydrochlorin. Finally, it catalyzes the ferrochelation of sirohydrochlorin to yield siroheme. The polypeptide is Siroheme synthase 2 (Aeromonas hydrophila subsp. hydrophila (strain ATCC 7966 / DSM 30187 / BCRC 13018 / CCUG 14551 / JCM 1027 / KCTC 2358 / NCIMB 9240 / NCTC 8049)).